The chain runs to 263 residues: SPRY domain-containing SOCS box protein 2 (263 aa).

A compositionally biased stretch (polar residues) spans 1-16; that stretch reads MGQTALAGGSSSTPTP. The tract at residues 1–48 is disordered; that stretch reads MGQTALAGGSSSTPTPQALYPDLSCPEGLEELLSAPPPDLGAQRRHGW. The 196-residue stretch at 26–221 folds into the B30.2/SPRY domain; the sequence is PEGLEELLSA…VRIRYLGERR (196 aa). In terms of domain architecture, SOCS box spans 222-263; that stretch reads AEPHSLLHLSRLCVRHNLGDTRLGQVSALPLPPAMKRYLLYQ.

The protein belongs to the SPSB family. Component of the probable ECS(SPSB2) E3 ubiquitin-protein ligase complex which contains CUL5, RNF7/RBX2, Elongin BC complex and SPSB2. Interacts with CUL5, RNF7, ELOB and ELOC. Interacts with MET. Interacts (via B30.2/SPRY domain) with PAWR; this interaction occurs in association with the Elongin BC complex. Interacts with NOS2. As to quaternary structure, (Microbial infection) Interacts (via C-terminus) with HCV envelope glycoprotein E1. Interacts (via C-terminus) with HCV non-structural protein 5A; this interaction targets NS5A for ubiquitination and degradation.

The protein resides in the cytoplasm. Its subcellular location is the cytosol. It functions in the pathway protein modification; protein ubiquitination. In terms of biological role, substrate recognition component of a SCF-like ECS (Elongin BC-CUL2/5-SOCS-box protein) E3 ubiquitin-protein ligase complex which mediates the ubiquitination and subsequent proteasomal degradation of target proteins. Negatively regulates nitric oxide (NO) production and limits cellular toxicity in activated macrophages by mediating the ubiquitination and proteasomal degradation of NOS2. Acts as a bridge which links NOS2 with the ECS E3 ubiquitin ligase complex components ELOC and CUL5. This chain is SPRY domain-containing SOCS box protein 2 (SPSB2), found in Homo sapiens (Human).